The following is an 880-amino-acid chain: Valine--tRNA ligase (880 aa).

Positions 51–61 match the 'HIGH' region motif; that stretch reads PNVTGELHLGH. Positions 529-533 match the 'KMSKS' region motif; that stretch reads KMSKT. Lys-532 serves as a coordination point for ATP. The stretch at 815–854 forms a coiled coil; sequence MSTMVDLEAEAKRVEAEIAELETQIERLSARLSDTQFLAK.

The protein belongs to the class-I aminoacyl-tRNA synthetase family. ValS type 1 subfamily. In terms of assembly, monomer.

It localises to the cytoplasm. The catalysed reaction is tRNA(Val) + L-valine + ATP = L-valyl-tRNA(Val) + AMP + diphosphate. Its function is as follows. Catalyzes the attachment of valine to tRNA(Val). As ValRS can inadvertently accommodate and process structurally similar amino acids such as threonine, to avoid such errors, it has a 'posttransfer' editing activity that hydrolyzes mischarged Thr-tRNA(Val) in a tRNA-dependent manner. The chain is Valine--tRNA ligase from Dehalococcoides mccartyi (strain ATCC BAA-2266 / KCTC 15142 / 195) (Dehalococcoides ethenogenes (strain 195)).